Here is a 356-residue protein sequence, read N- to C-terminus: MKQLIVNSVATVALASLVAGCFEPPPATTTQTGFRGLSMGEVLHPATVKAKKERDAQYPPALAAVKAEGPPVSQVYKNVKVLGNLTEAEFLRTMTAITEWVSPQEGCTYCHDENNLASEAKYPYVVARRMLEMTRAINTNWTQHVAQTGVTCYTCHRGTPLPPYVRYLEPTLPLNNRETPTHVERVETRSGYVVRLAKYTAYSALNYDPFTMFLANDKRQVRVVPQTALPLVGVSRGKERRPLSDAYATFALMMSISDSLGTNCTFCHNAQTFESWGKKSTPQRAIAWWGIRMVRDLNMNYLAPLNASLPASRLGRQGEAPQADCRTCHQGVTKPLFGASRLKDYPELGPIKAAAK.

Positions 1–20 are cleaved as a signal peptide; it reads MKQLIVNSVATVALASLVAG. Cysteine 21 is lipidated: S-diacylglycerol cysteine. Heme contacts are provided by methionine 94, cysteine 107, cysteine 110, histidine 111, methionine 130, histidine 144, cysteine 152, cysteine 155, histidine 156, methionine 253, cysteine 264, cysteine 267, histidine 268, cysteine 325, cysteine 328, and histidine 329.

Component of the photosynthetic reaction center composed of protein subunits L (PufL), M (PufM), H (PuhA) and cytochrome C (PufC). In terms of processing, binds 4 heme groups per subunit. Post-translationally, after the signal sequence is removed, the N-terminal cysteine is modified to form a diacylglyceride thioether, but the alpha-amino group is free and is not N-palmitoylated.

The protein resides in the cellular chromatophore membrane. Functionally, the reaction center of purple bacteria contains a tightly bound cytochrome molecule which re-reduces the photo oxidized primary electron donor. The polypeptide is Photosynthetic reaction center cytochrome c subunit (Blastochloris viridis (Rhodopseudomonas viridis)).